The primary structure comprises 379 residues: MARVGPGRAGVSCQGRGRGRGGSGQRRPPTWEISDSDAEDSAGSEAAARARDPAGERRAAAEALRLLRPEQVLKRLAVCVDTAILEDAGADVLMEALEALGCECRIEPQRPARSLRWTRASPDPCPRSLPPEVWAAGEQELLLLLEPEEFLQGVATLTQISGPTHWVPWISPETTARPHLAVIGLDAYLWSRQHVSRGTQQPESPKVAGAEVAVSWPEVEEALVLLQLWANLDVLLVASWQELSRHVCAVTKALAQYPLKQYRESQAFSFCTAGRWAAGEPVARDGAGLQAAWRRQIRQFSRVSPAVADAVVTAFPSPRLLQQALEACSTERERMGLLADLPVPPSEGGRPRRVGPDLSRRICLFLTTANPDLLLDLGS.

The tract at residues 1–55 (MARVGPGRAGVSCQGRGRGRGGSGQRRPPTWEISDSDAEDSAGSEAAARARDPAG) is disordered. The nuclease-like domain; forms the post-nick DNA binding interface and is involved in DNA recognition and bending stretch occupies residues 50 to 266 (ARDPAGERRA…YPLKQYRESQ (217 aa)). A helix-hairpin-helix (2HhH); forms the pre-nick DNA binding interface and is involved in DNA recognition and bending region spans residues 288 to 379 (GLQAAWRRQI…NPDLLLDLGS (92 aa)).

The protein belongs to the EME1/MMS4 family. In terms of assembly, part of the heterodimeric MUS81-EME2 complex; the complex forms specifically during the DNA replication phase of the cell cycle.

The protein resides in the nucleus. Non-catalytic subunit of the structure-specific, heterodimeric DNA endonuclease MUS81-EME2 which is involved in the maintenance of genome stability. In the complex, EME2 is required for DNA cleavage, participating in DNA recognition and bending. MUS81-EME2 cleaves 3'-flaps and nicked Holliday junctions, and exhibit limited endonuclease activity with 5' flaps and nicked double-stranded DNAs. MUS81-EME2 which is active during the replication of DNA is more specifically involved in replication fork processing. Replication forks frequently encounter obstacles to their passage, including DNA base lesions, DNA interstrand cross-links, difficult-to-replicate sequences, transcription bubbles, or tightly bound proteins. One mechanism for the restart of a stalled replication fork involves nucleolytic cleavage mediated by the MUS81-EME2 endonuclease. By acting upon the stalled fork, MUS81-EME2 generates a DNA double-strand break (DSB) that can be repaired by homologous recombination, leading to the restoration of an active fork. MUS81-EME2 could also function in telomere maintenance. This chain is Structure-specific endonuclease subunit EME2, found in Homo sapiens (Human).